A 96-amino-acid chain; its full sequence is (4S)-4-hydroxy-5-phosphonooxypentane-2,3-dione isomerase (96 aa).

The ABM domain maps to 2–91 (HVTLVEINVH…MTGPRKKRLF (90 aa)).

The protein belongs to the LsrG family. As to quaternary structure, homodimer.

It is found in the cytoplasm. The catalysed reaction is (2S)-2-hydroxy-3,4-dioxopentyl phosphate = 3-hydroxy-2,4-dioxopentyl phosphate. Its function is as follows. Involved in the degradation of phospho-AI-2, thereby terminating induction of the lsr operon and closing the AI-2 signaling cycle. Catalyzes the conversion of (4S)-4-hydroxy-5-phosphonooxypentane-2,3-dione (P-DPD) to 3-hydroxy-5-phosphonooxypentane-2,4-dione (P-HPD). This chain is (4S)-4-hydroxy-5-phosphonooxypentane-2,3-dione isomerase, found in Shigella flexneri serotype 5b (strain 8401).